Reading from the N-terminus, the 393-residue chain is Chalcone synthase DIII (393 aa).

Cys-164 is a catalytic residue.

It belongs to the thiolase-like superfamily. Chalcone/stilbene synthases family.

It carries out the reaction (E)-4-coumaroyl-CoA + 3 malonyl-CoA + 3 H(+) = 2',4,4',6'-tetrahydroxychalcone + 3 CO2 + 4 CoA. Its pathway is secondary metabolite biosynthesis; flavonoid biosynthesis. Its function is as follows. The primary product of this enzyme is 4,2',4',6'-tetrahydroxychalcone (also termed naringenin-chalcone or chalcone) which can under specific conditions spontaneously isomerize into naringenin. This is Chalcone synthase DIII (CHS-DIII) from Ipomoea batatas (Sweet potato).